The chain runs to 124 residues: Small ribosomal subunit protein uS12 (124 aa).

A disordered region spans residues 9 to 28; it reads RTERQTLSRKTKSPALRSCP. Residue Asp89 is modified to 3-methylthioaspartic acid. The disordered stretch occupies residues 104–124; sequence TAGVKDRRQSRSKYGAKAPKE.

It belongs to the universal ribosomal protein uS12 family. As to quaternary structure, part of the 30S ribosomal subunit. Contacts proteins S8 and S17. May interact with IF1 in the 30S initiation complex.

Functionally, with S4 and S5 plays an important role in translational accuracy. Its function is as follows. Interacts with and stabilizes bases of the 16S rRNA that are involved in tRNA selection in the A site and with the mRNA backbone. Located at the interface of the 30S and 50S subunits, it traverses the body of the 30S subunit contacting proteins on the other side and probably holding the rRNA structure together. The combined cluster of proteins S8, S12 and S17 appears to hold together the shoulder and platform of the 30S subunit. The polypeptide is Small ribosomal subunit protein uS12 (Synechococcus sp. (strain RCC307)).